A 184-amino-acid polypeptide reads, in one-letter code: UPF0149 protein PA14_69010 (184 aa).

Belongs to the UPF0149 family.

The sequence is that of UPF0149 protein PA14_69010 from Pseudomonas aeruginosa (strain UCBPP-PA14).